The sequence spans 253 residues: Imidazole glycerol phosphate synthase subunit HisF (253 aa).

Catalysis depends on residues Asp11 and Asp130.

Belongs to the HisA/HisF family. In terms of assembly, heterodimer of HisH and HisF.

The protein resides in the cytoplasm. It carries out the reaction 5-[(5-phospho-1-deoxy-D-ribulos-1-ylimino)methylamino]-1-(5-phospho-beta-D-ribosyl)imidazole-4-carboxamide + L-glutamine = D-erythro-1-(imidazol-4-yl)glycerol 3-phosphate + 5-amino-1-(5-phospho-beta-D-ribosyl)imidazole-4-carboxamide + L-glutamate + H(+). It participates in amino-acid biosynthesis; L-histidine biosynthesis; L-histidine from 5-phospho-alpha-D-ribose 1-diphosphate: step 5/9. Its function is as follows. IGPS catalyzes the conversion of PRFAR and glutamine to IGP, AICAR and glutamate. The HisF subunit catalyzes the cyclization activity that produces IGP and AICAR from PRFAR using the ammonia provided by the HisH subunit. This chain is Imidazole glycerol phosphate synthase subunit HisF, found in Paracoccus denitrificans (strain Pd 1222).